A 1018-amino-acid chain; its full sequence is Fibronectin-binding protein A (1018 aa).

An N-terminal signal peptide occupies residues 1–36; that stretch reads MKNNLRYGIRKHKLGAASVFLGTMIVVGMGQDKEAA. Positions 7 to 18 match the YSIRK-G/S signaling motif motif; it reads YGIRKHKLGAAS. The tract at residues 37-511 is ligand-binding A region; it reads ASEQKTTTVE…SNKANGNEKN (475 aa). Disordered stretches follow at residues 38–61 and 78–195; these read SEQK…SETQ and ATVT…ETGT. Polar residues-rich tracts occupy residues 39 to 61 and 78 to 92; these read EQKT…SETQ and ATVT…QVTT. Positions 112-126 are enriched in basic and acidic residues; it reads TVKEEVVKEEAKPQV. A compositionally biased stretch (polar residues) spans 129–139; it reads TTQSQDNSGDQ. The fibrinogen/elastin/tropoelastin-binding stretch occupies residues 194-511; the sequence is GTDVTSKVTV…SNKANGNEKN (318 aa). The interval 512–872 is fibronectin-binding; the sequence is GPIIQNNKFE…EGQQTIEEDT (361 aa). Residues 545-574 form a B-1 repeat; that stretch reads EEYDSSTLDIDYHTAIDGGGGYVDGYIETI. Positions 545–604 are 2 X approximate tandem repeats; it reads EEYDSSTLDIDYHTAIDGGGGYVDGYIETIEETDSSAIDIDYHTAVDSEAGHVGGYTESS. A B-2 repeat occupies 575-604; the sequence is EETDSSAIDIDYHTAVDSEAGHVGGYTESS. 3 disordered regions span residues 595–622, 740–813, and 827–997; these read GHVG…NSKH, LGYE…DIDF, and EIIE…GMLF. One copy of the D-1 repeat lies at 745–782; the sequence is GQNSGNQSFEEDTEEDKPKYEQGGNIVDIDFDSVPQIH. A 4 X approximate tandem repeats, D-3 repeat has more fibronectin-binding activity region spans residues 745–878; sequence GQNSGNQSFE…EEDTTPPIVP (134 aa). The stretch at 783-820 is one D-2 repeat; sequence GQNKGNQSFEEDTEKDKPKYEHGGNIIDIDFDSVPHIH. A D-3 repeat occupies 821-859; sequence GFNKHTEIIEEDTNKDKPSYQFGGHNSVDFEEDTLPKVS. The span at 827–838 shows a compositional bias: basic and acidic residues; it reads EIIEEDTNKDKP. A D-4; truncated repeat occupies 860–878; it reads GQNEGQQTIEEDTTPPIVP. Residues 875-938 are compositionally biased toward pro residues; that stretch reads PIVPPTPPTP…PAEPGKPVPP (64 aa). WR repeat units follow at residues 879–892, 893–906, 907–920, 921–934, and 935–948; these read PTPP…EPET, PTPP…EPGK, and PVPP…KPSK. The 5 X tandem repeats, Pro-rich (WR) stretch occupies residues 879–948; it reads PTPPTPEVPS…AKEEPKKPSK (70 aa). An LPXTG sorting signal motif is present at residues 982-986; the sequence is LPETG. A Pentaglycyl murein peptidoglycan amidated threonine modification is found at T985. A propeptide spans 986-1018 (removed by sortase); the sequence is GGEESTNKGMLFGGLFSILGLALLRRNKKNHKA.

The protein localises to the secreted. Its subcellular location is the cell wall. Functionally, possesses multiple, substituting fibronectin (Fn) binding regions, each capable of conferring adherence to both soluble and immobilized forms of Fn. This confers to S.aureus the ability to invade endothelial cells both in vivo and in vitro, without requiring additional factors, although in a slow and inefficient way through actin rearrangements in host cells. This invasion process is mediated by integrin alpha-5/beta-1. Promotes bacterial attachment to both soluble and immobilized forms of fibrinogen (Fg) by means of a unique binding site localized within the 17 C-terminal residues of the gamma-chain of human Fg. Both plasma proteins (Fn and Fg) function as a bridge between bacterium and host cell. Promotes attachment to immobilized elastin peptides in a dose-dependent and saturable manner. Promotes attachment to both full-length and segments of immobilized human tropoelastin at multiple sites in a dose and pH-dependent manner. Promotes adherence to and aggregation of activated platelets independently of other S.aureus surface molecules. Is a critical mediator implicated in the induction of experimental endocarditis in rats with catheter-induced aortic vegetations, promoting both colonization and persistence of the bacterium into the host. The chain is Fibronectin-binding protein A (fnbA) from Staphylococcus aureus (strain NCTC 8325 / PS 47).